A 107-amino-acid chain; its full sequence is U1-lycotoxin-Ls1b (107 aa).

The first 20 residues, 1–20 (MMKVLVVVALLVTHISYSSS), serve as a signal peptide directing secretion. The propeptide occupies 21 to 41 (EGIDDLEADELLSLMANEQTR). 4 disulfide bridges follow: C44–C59, C51–C68, C58–C86, and C70–C84.

It belongs to the neurotoxin 19 (CSTX) family. 04 (U1-Lctx) subfamily. Expressed by the venom gland.

The protein localises to the secreted. This Lycosa singoriensis (Wolf spider) protein is U1-lycotoxin-Ls1b.